The sequence spans 61 residues: uncharacterized protein (61 aa).

Residues 10–61 (YEEENDNEDFEEEVELSREDLNQIINELAPFLIKLLTDLTELTQKKEESENE) are a coiled coil.

This is an uncharacterized protein from Acidianus bottle-shaped virus (isolate Italy/Pozzuoli) (ABV).